Here is a 902-residue protein sequence, read N- to C-terminus: Adhesion G-protein coupled receptor D1 (902 aa).

Residues 1–25 (MKKLLPLCCWHSWLLLFYCDFQVRG) form the signal peptide. The Extracellular portion of the chain corresponds to 26–598 (AHTRSHVHPG…GHQVALSSIS (573 aa)). N-linked (GlcNAc...) asparagine glycans are attached at residues Asn-68, Asn-76, Asn-83, Asn-89, Asn-121, Asn-183, Asn-217, Asn-310, Asn-330, Asn-337, Asn-347, Asn-422, Asn-504, Asn-529, and Asn-561. The Pentraxin (PTX) domain occupies 111 to 304 (KGVTFLYYRK…VNTMAPTNAY (194 aa)). The 187-residue stretch at 399-585 (QVAIVGSSSM…AILMQVVPLE (187 aa)) folds into the GAIN-B domain. 2 disulfides stabilise this stretch: Cys-538-Cys-567 and Cys-555-Cys-569. The tract at residues 538-585 (CAFLDFSSGEGIWSNQGCALTEGNLSYSICRCTHLTNFAILMQVVPLE) is GPS. A stachel region spans residues 574–582 (NFAILMQVV). Residue Gln-591 coordinates 17beta-hydroxy-5alpha-androstan-3-one. The helical transmembrane segment at 599–619 (YIGCSLSVLCLAITLVTFAVL) threads the bilayer. The Cytoplasmic segment spans residues 620 to 630 (SSVSTIRNQRY). The chain crosses the membrane as a helical span at residues 631–651 (HIHANLSCAVLVAQVLLLISF). Topologically, residues 652–661 (RFEPGTAPCQ) are extracellular. Residues Cys-660 and Cys-732 are joined by a disulfide bond. Residues 662–682 (VLAMLLHYFFLSAFAWMLVEG) traverse the membrane as a helical segment. At 683-702 (LHLYSMVIKVFGSEDSKHRY) the chain is on the cytoplasmic side. Residues 703–723 (YYGIGWGFPLLICIISIVFAM) traverse the membrane as a helical segment. The Extracellular segment spans residues 724 to 739 (DSYGTSKNCWLSLGNG). The chain crosses the membrane as a helical span at residues 740 to 760 (AIWAFVAPALFIIVVNIGILI). Topologically, residues 761–788 (AVTRVISQISAENYKIHGDPSAFKLTAK) are cytoplasmic. The helical transmembrane segment at 789-809 (AVAVLLPILGTSWVFGVLAVN) threads the bilayer. Residues 810 to 812 (NQA) are Extracellular-facing. The chain crosses the membrane as a helical span at residues 813–833 (MVFQYMFAILNSLQGFFIFLF). The Cytoplasmic segment spans residues 834–902 (HCLLNSEVRA…SGHRVDLSAV (69 aa)). A disordered region spans residues 865 to 902 (KPFSSDIMNGTRPATGSTRLSPWDKSSHSGHRVDLSAV). Positions 870 to 884 (DIMNGTRPATGSTRL) are enriched in polar residues. A compositionally biased stretch (basic and acidic residues) spans 889–902 (KSSHSGHRVDLSAV).

This sequence belongs to the G-protein coupled receptor 2 family. Adhesion G-protein coupled receptor (ADGR) subfamily. Heterodimer of 2 chains generated by proteolytic processing; the large extracellular N-terminal fragment and the membrane-bound C-terminal fragment predominantly remain associated and non-covalently linked. Interacts with ESYT1; interaction takes place in absence of cytosolic calcium and inhibits the G protein-coupled receptor activity of ADGRD1. Autoproteolytically processed at the GPS region of the GAIN-B domain; this cleavage modulates receptor activity. Cleavage takes place early in the secretory pathway before N-glycosylation.

It localises to the cell membrane. With respect to regulation, forms a heterodimer of 2 chains generated by proteolytic processing that remain associated through non-covalent interactions mediated by the GAIN-B domain. In the inactivated receptor, the Stachel sequence (also named stalk) is embedded in the GAIN-B domain, where it adopts a beta-strand conformation. On activation, the Stachel moves into the 7 transmembrane region and adopts a twisted hook-shaped configuration that forms contacts within the receptor, leading to coupling of a G-alpha protein, which activates signaling. The cleaved GAIN-B and N-terminal domains can then dissociate from the rest of the receptor. Interaction with ESYT1 in absence of cytosolic calcium inhibits the G protein-coupled receptor activity; interaction and inhibition is relieved when cytosolic calcium increases. Functionally, adhesion G-protein coupled receptor (aGPCR) for androgen hormone 5alpha-dihydrotestosterone (5alpha-DHT), also named 17beta-hydroxy-5alpha-androstan-3-one, the most potent hormone among androgens. Also activated by methenolone drug. Ligand binding causes a conformation change that triggers signaling via guanine nucleotide-binding proteins (G proteins) and modulates the activity of downstream effectors, such as adenylate cyclase. ADGRD1 is coupled to G(s) G proteins and mediates activation of adenylate cyclase activity. Acts as a 5alpha-DHT receptor in muscle cells, thereby increasing intracellular cyclic AMP (cAMP) levels and enhancing muscle strength. This is Adhesion G-protein coupled receptor D1 (ADGRD1) from Bos taurus (Bovine).